The sequence spans 543 residues: Periplasmic oligopeptide-binding protein OppA (543 aa).

Residues 1–26 (MSNITKKSLIAAGILTALIAASAATA) form the signal peptide. A disulfide bond links Cys-297 and Cys-443.

The protein belongs to the bacterial solute-binding protein 5 family. The complex is composed of two ATP-binding proteins (OppD and OppF), two transmembrane proteins (OppB and OppC) and a solute-binding protein (OppA).

It is found in the periplasm. Part of the ABC transporter complex OppABCDF involved in the uptake of oligopeptides, including the cell wall murein tripeptide L-alanyl-gamma-D-glutamyl-meso-diaminopimelate. Plays an important nutritional role and is involved in the recycling of cell wall peptides. Binds peptides containing from two to five amino acid residues regardless of their sequence. Also binds cell wall peptides, such as L-alanyl-gamma-D-glutamyl-meso-diaminopimelate. This is Periplasmic oligopeptide-binding protein OppA from Salmonella typhimurium (strain LT2 / SGSC1412 / ATCC 700720).